We begin with the raw amino-acid sequence, 146 residues long: Protein US8.5 (146 aa).

A disordered region spans residues 63–93; that stretch reads LIAIADARGDPPETLPPGAGGAAPACRRPPR. Positions 84–93 are enriched in low complexity; that stretch reads AAPACRRPPR.

This sequence belongs to the HHV-1 US8.5 protein family. Phosphorylated.

The protein localises to the host nucleus. The protein resides in the host nucleolus. The polypeptide is Protein US8.5 (Human herpesvirus 2 (strain HG52) (HHV-2)).